Here is a 593-residue protein sequence, read N- to C-terminus: MSGKIEYISGPVVKADLPGARLYELVFVGEIRLFGEVVRVQGDKAFIQVYEDTTGLKPGEPVERTGEPLSAWLGPTIIGKIYDGVQRPLKDIEEISKNPFIARGIGYDKAPPLDLKSEFDFRPAVKPGDEVSPGDVLGSVKETELMTHYILYPPLPEHAPGVVEWVAEGKYKVDDVIARIKTKRGVVEVKMWHKWPVRRPRPFREKLPPVEPLITGVRTVDTMFPIAKGGAAAVPGPFGSGKTVMIRTLSMFAQSRFIIPVLCGERGNEAADALQGLLKLKDPATGRPLLERTTIIVNTSNMPVAAREASVYMGTTLGEYFRDQGYDVLVLADSTSRWAEAMREVALRIGEMPSEEGYPAYLPTRLAEFYERAGRVVLMGSKERIGSLTIAASVSPPGGDFTEPVTSNTLRFIGAFWPLSPRLAYSRHYPAIDWLAAFSRYVDTVEVWWSKNVSPEWRKIRDSLQSLLVKEAELQEIVRILGTEALSEYEKHILNVAFMIREGFLKQDAYNPIDTPSAPIKQFLLMKAIYTYYEEGLKAIEAGVPASALRELDSVKRLPRLRMEVTNDAAKEQLTKFIETLVLEIREKVARKS.

236–243 contributes to the ATP binding site; the sequence is GPFGSGKT.

Belongs to the ATPase alpha/beta chains family. Has multiple subunits with at least A(3), B(3), C, D, E, F, H, I and proteolipid K(x).

The protein localises to the cell membrane. It catalyses the reaction ATP + H2O + 4 H(+)(in) = ADP + phosphate + 5 H(+)(out). Its function is as follows. Component of the A-type ATP synthase that produces ATP from ADP in the presence of a proton gradient across the membrane. The A chain is the catalytic subunit. The chain is A-type ATP synthase subunit A from Pyrobaculum arsenaticum (strain DSM 13514 / JCM 11321 / PZ6).